Reading from the N-terminus, the 333-residue chain is Calcium uniporter protein, mitochondrial (333 aa).

Residues 1–22 (MRNGRCLVTPFVTAQRLANLRN) constitute a mitochondrion transit peptide. Topologically, residues 23–214 (TLWNRQQIAF…QECEAHTDRV (192 aa)) are mitochondrial matrix. Residues 180 to 193 (KKLLLQLENAETLL) are a coiled coil. The segment at 195-213 (PLHDAKRKIEQECEAHTDR) is outer juxtamembrane helix (OJMH). The helical transmembrane segment at 215–234 (MWAGFAAMGVQTGLFARLTW) threads the bilayer. Residues 235-243 (WEYSWDIME) are Mitochondrial intermembrane-facing. A Selectivity filter motif is present at residues 239–247 (WDIMEPVTY). Residue E243 coordinates Ca(2+). Residues 244–260 (PVTYFATYSTVCATFGY) traverse the membrane as a helical segment. Residues 261-333 (YLYTQQSFEY…SYLSNLEAEK (73 aa)) are Mitochondrial matrix-facing. The inner juxtamembrane helix (IJMH) stretch occupies residues 262-271 (LYTQQSFEYP). A coiled-coil region spans residues 289–316 (QNFDIEKYNRLVTEVDELRNQLKRMRDP).

Belongs to the MCU (TC 1.A.77) family.

The protein localises to the mitochondrion inner membrane. It catalyses the reaction Ca(2+)(in) = Ca(2+)(out). Inhibited by ruthenium red or its derivative Ru360; possibly by obstructing the pore. In terms of biological role, mitochondrial inner membrane calcium uniporter that mediates calcium uptake into mitochondria. Constitutes a pore-forming and calcium-conducting subunit. Mitochondrial calcium homeostasis plays key roles in cellular physiology and regulates cell bioenergetics, cytoplasmic calcium signals and activation of cell death pathways. Required for rapid mitochondrial calcium uptake and mitochondrial reactive oxygen species (mtROS) production after wounding. In addition, together with mitochondrial calcium regulator micu-1, required for mitochondrial calcium uptake following axon injury in PLM touch receptor neurons. The chain is Calcium uniporter protein, mitochondrial from Caenorhabditis elegans.